The following is a 215-amino-acid chain: Proapoptotic nucleolar protein 1 (215 aa).

The interval 35–215 is disordered; that stretch reads RKGTPTARCL…RLPAPRSAST (181 aa). Over residues 169-180 the composition is skewed to pro residues; that stretch reads PRPPQHLSPPQP. The segment at 185 to 215 is necessary for nucleolar localization; that stretch reads MGAAEGSRRADTHHARRRRRARLPAPRSAST.

Widely expressed.

The protein localises to the nucleus. It is found in the nucleolus. In terms of biological role, apoptosis-inducing protein that modulates the tumor suppressor function of CDKN2A/p14ARF. Enhances the stability of CDKN2A/p14ARF protein by protecting it from degradation. May act as a tumor suppressor. The polypeptide is Proapoptotic nucleolar protein 1 (Homo sapiens (Human)).